Consider the following 359-residue polypeptide: Cell division protein ZipA (359 aa).

The Periplasmic portion of the chain corresponds to Met1 to Asn4. A helical membrane pass occupies residues Thr5–Ser25. Over Asn26–Lys359 the chain is Cytoplasmic. Positions Pro78–Pro101 are disordered.

It belongs to the ZipA family. In terms of assembly, interacts with FtsZ via their C-terminal domains.

It localises to the cell inner membrane. Essential cell division protein that stabilizes the FtsZ protofilaments by cross-linking them and that serves as a cytoplasmic membrane anchor for the Z ring. Also required for the recruitment to the septal ring of downstream cell division proteins. The protein is Cell division protein ZipA of Mannheimia succiniciproducens (strain KCTC 0769BP / MBEL55E).